Here is a 227-residue protein sequence, read N- to C-terminus: Large ribosomal subunit protein uL3 (227 aa).

An N5-methylglutamine modification is found at Gln-158.

This sequence belongs to the universal ribosomal protein uL3 family. As to quaternary structure, part of the 50S ribosomal subunit. Forms a cluster with proteins L14 and L19. Methylated by PrmB.

Functionally, one of the primary rRNA binding proteins, it binds directly near the 3'-end of the 23S rRNA, where it nucleates assembly of the 50S subunit. The protein is Large ribosomal subunit protein uL3 of Polaromonas sp. (strain JS666 / ATCC BAA-500).